Here is a 257-residue protein sequence, read N- to C-terminus: 5'-nucleotidase SurE (257 aa).

The a divalent metal cation site is built by D13, D14, S44, and N100.

Belongs to the SurE nucleotidase family. A divalent metal cation is required as a cofactor.

The protein localises to the cytoplasm. The catalysed reaction is a ribonucleoside 5'-phosphate + H2O = a ribonucleoside + phosphate. Its function is as follows. Nucleotidase that shows phosphatase activity on nucleoside 5'-monophosphates. This chain is 5'-nucleotidase SurE, found in Phocaeicola vulgatus (strain ATCC 8482 / DSM 1447 / JCM 5826 / CCUG 4940 / NBRC 14291 / NCTC 11154) (Bacteroides vulgatus).